Consider the following 854-residue polypeptide: Valine--tRNA ligase (854 aa).

A 'HIGH' region motif is present at residues 46 to 56 (PTVSGDLHIGH). Residues 551–555 (KMSKS) carry the 'KMSKS' region motif. Residue Lys554 participates in ATP binding.

It belongs to the class-I aminoacyl-tRNA synthetase family. ValS type 2 subfamily. In terms of assembly, monomer.

It localises to the cytoplasm. It catalyses the reaction tRNA(Val) + L-valine + ATP = L-valyl-tRNA(Val) + AMP + diphosphate. Its function is as follows. Catalyzes the attachment of valine to tRNA(Val). As ValRS can inadvertently accommodate and process structurally similar amino acids such as threonine, to avoid such errors, it has a 'posttransfer' editing activity that hydrolyzes mischarged Thr-tRNA(Val) in a tRNA-dependent manner. The sequence is that of Valine--tRNA ligase from Orientia tsutsugamushi (strain Boryong) (Rickettsia tsutsugamushi).